The chain runs to 129 residues: GEL complex subunit OPTI (129 aa).

Over 1-44 (MSGGRRKEEPPQPQLANGALKVSVWSKVLRSDAAWEDKDEFLDV) the chain is Cytoplasmic. The helical transmembrane segment at 45-65 (IYWFRQIIAVVLGVIWGVLPL) threads the bilayer. A topological domain (lumenal) is located at residue arginine 66. Residues 67–84 (GFLGIAGFCVINAGVLYL) form a helical membrane-spanning segment. The Cytoplasmic segment spans residues 85-103 (YFSNYLQIDEEEYGGTWEL). The helical transmembrane segment at 104–127 (TKEGFMTSFALFMVIWIIFYTAIH) threads the bilayer. Over 128–129 (YD) the chain is Lumenal.

It belongs to the EMC6 family. Component of the GET- and EMC-like (GEL) complex, composed of RAB5IF/OPTI and TMCO1. The GEL complex is part of the multi-pass translocon (MPT) complex, composed of three subcomplexes, the GEL complex (composed of RAB5IF/OPTI and TMCO1), the BOS complex (composed of NCLN/Nicalin, NOMO1 and TMEM147) and the PAT complex (composed of WDR83OS/Asterix and CCDC47). The MPT complex associates with the SEC61 complex. Interacts with NDUFS3, NDUFA4, NDUFV1, NDUFA9 and NDUFS8 of the mitochondrial membrane respiratory chain NADH dehydrogenase (Complex I). Interacts with UQCRC2 of the ubiquinol-cytochrome c reductase complex (Complex III). Interacts with COX5A and COX7C of the cytochrome c oxidase complex (Complex IV).

It is found in the endoplasmic reticulum membrane. The protein localises to the mitochondrion inner membrane. Component of the multi-pass translocon (MPT) complex that mediates insertion of multi-pass membrane proteins into the lipid bilayer of membranes. The MPT complex takes over after the SEC61 complex: following membrane insertion of the first few transmembrane segments of proteins by the SEC61 complex, the MPT complex occludes the lateral gate of the SEC61 complex to promote insertion of subsequent transmembrane regions. Within the MPT complex, the GEL subcomplex may mediate insertion of transmembrane regions into the membrane. In addition to its role in multi-pass membrane insertion, RAB5IF/OPTI also acts as an assembly factor for mitochondrial respiratory complexes. This chain is GEL complex subunit OPTI (RAB5IF), found in Canis lupus familiaris (Dog).